A 163-amino-acid polypeptide reads, in one-letter code: Probable phosphotransferase enzyme IIB component M6_Spy0801 (163 aa).

One can recognise a PTS EIIB type-4 domain in the interval 1–163 (MITQIRVDDR…TKVHLSQLVN (163 aa)). The active-site Pros-phosphohistidine intermediate is the histidine 13.

The protein resides in the cytoplasm. Its function is as follows. The phosphoenolpyruvate-dependent sugar phosphotransferase system (sugar PTS), a major carbohydrate active -transport system, catalyzes the phosphorylation of incoming sugar substrates concomitantly with their translocation across the cell membrane. This Streptococcus pyogenes serotype M6 (strain ATCC BAA-946 / MGAS10394) protein is Probable phosphotransferase enzyme IIB component M6_Spy0801.